Reading from the N-terminus, the 357-residue chain is Homoserine kinase (357 aa).

The protein belongs to the GHMP kinase family. Homoserine kinase subfamily.

The enzyme catalyses L-homoserine + ATP = O-phospho-L-homoserine + ADP + H(+). It functions in the pathway amino-acid biosynthesis; L-threonine biosynthesis; L-threonine from L-aspartate: step 4/5. Functionally, commits homoserine to the threonine biosynthesis pathway by catalyzing its O-phosphorylation. The chain is Homoserine kinase from Cryptococcus neoformans var. grubii serotype A (strain H99 / ATCC 208821 / CBS 10515 / FGSC 9487) (Filobasidiella neoformans var. grubii).